A 436-amino-acid chain; its full sequence is Homeobox protein PKNOX1 (436 aa).

The interval 24–49 is disordered; the sequence is LKTEQDPNCSEPDVEGVSPPPVGSQT. Residues serine 33 and serine 41 each carry the phosphoserine modification. Positions 80–163 constitute an MEIS N-terminal domain; the sequence is GSEGTTSASF…MNSETLLSGE (84 aa). A DNA-binding region (homeobox; TALE-type) is located at residues 259–321; sequence SKNKRGVLPK…NARRRILQPM (63 aa). Residues 401-436 form a disordered region; sequence AEQSEDDSVDSTGDGGAALAPGHLGGLVLENSDSLQ.

This sequence belongs to the TALE/MEIS homeobox family. In terms of assembly, interacts with MN1.

It is found in the nucleus. Activates transcription in the presence of PBX1A and HOXA1. The protein is Homeobox protein PKNOX1 of Bos taurus (Bovine).